The primary structure comprises 101 residues: Small ribosomal subunit protein uS14 (101 aa).

The protein belongs to the universal ribosomal protein uS14 family. In terms of assembly, part of the 30S ribosomal subunit. Contacts proteins S3 and S10.

Functionally, binds 16S rRNA, required for the assembly of 30S particles and may also be responsible for determining the conformation of the 16S rRNA at the A site. In Buchnera aphidicola subsp. Baizongia pistaciae (strain Bp), this protein is Small ribosomal subunit protein uS14.